We begin with the raw amino-acid sequence, 354 residues long: Guanine nucleotide-binding protein alpha-12 subunit (354 aa).

The G-alpha domain maps to 31–354 (QPLKLLLLGS…SLLMNVAEIL (324 aa)). The tract at residues 34-47 (KLLLLGSGECGKST) is G1 motif. Residues 39–46 (GSGECGKS), 178–184 (LRVRVKT), 203–207 (DVGGQ), 272–275 (NKID), and alanine 329 each bind GTP. The Mg(2+) site is built by serine 46 and threonine 184. A G2 motif region spans residues 176 to 184 (DFLRVRVKT). The segment at 199–208 (FKLVDVGGQK) is G3 motif. Residues 268–275 (VLFFNKID) are G4 motif. Residues 327–332 (TCALDS) form a G5 motif region.

Belongs to the G-alpha family. In terms of assembly, g proteins are composed of 3 units; alpha, beta and gamma. The alpha chain contains the guanine nucleotide binding site.

Guanine nucleotide-binding proteins (G proteins) are involved as modulators or transducers in various transmembrane signaling systems. The protein is Guanine nucleotide-binding protein alpha-12 subunit (gpaL) of Dictyostelium discoideum (Social amoeba).